A 1376-amino-acid chain; its full sequence is YLP motif-containing protein 1 (1376 aa).

Disordered stretches follow at residues Met1 to Asp335 and Ser511 to Arg1058. Over residues Tyr14–Ala27 the composition is skewed to pro residues. Low complexity-rich tracts occupy residues Ala31–Gly50 and Leu59–His80. Composition is skewed to pro residues over residues His81–Met93, Gln102–Pro114, Pro148–Tyr158, Met166–Tyr176, and Tyr184–Ile204. Composition is skewed to polar residues over residues Gly207–Pro216 and Ser238–Arg260. Residues Thr261–Gly271 are compositionally biased toward basic residues. Positions Asp277 to Ala286 are enriched in basic and acidic residues. Composition is skewed to pro residues over residues Pro303 to Glu320, Ser511 to Pro537, Leu545 to Met594, and Pro632 to Gln641. Positions Ser642–Val671 are enriched in polar residues. Position 675 is an N6-methyllysine (Lys675). Positions Arg698–Gly714 are enriched in basic and acidic residues. Composition is skewed to pro residues over residues Met738–Lys753, Thr773–Ile796, and Pro840–Val870. Lys886 participates in a covalent cross-link: Glycyl lysine isopeptide (Lys-Gly) (interchain with G-Cter in SUMO2). 4 stretches are compositionally biased toward basic and acidic residues: residues Ile896–Phe930, Thr937–Pro1004, Gly1013–Met1023, and Arg1039–Arg1058. A Glycyl lysine isopeptide (Lys-Gly) (interchain with G-Cter in SUMO2) cross-link involves residue Lys943. Positions Lys1326–Asp1333 are involved in interaction with PPP1CA.

As to quaternary structure, interacts with PPP1CA and NCOA5. Forms a complex with ILF2, ILF3, KHDRBS1, RBMX, NCOA5 and PPP1CA. In terms of tissue distribution, high level expression seen in the brain, adipose tissue, heart and kidney, with a low level expression in muscle, spleen and lung (at protein level).

It localises to the nucleus. Its subcellular location is the nucleus speckle. In terms of biological role, plays a role in the reduction of telomerase activity during differentiation of embryonic stem cells by binding to the core promoter of TERT and controlling its down-regulation. The polypeptide is YLP motif-containing protein 1 (Ylpm1) (Rattus norvegicus (Rat)).